A 138-amino-acid polypeptide reads, in one-letter code: Protein FAM216B (138 aa).

It belongs to the FAM216 family.

The polypeptide is Protein FAM216B (Fam216b) (Mus musculus (Mouse)).